Consider the following 391-residue polypeptide: Na(+)/H(+) antiporter NhaA 2 (391 aa).

11 helical membrane-spanning segments follow: residues 25 to 45, 56 to 76, 98 to 118, 128 to 148, 157 to 177, 180 to 200, 208 to 228, 264 to 284, 297 to 317, 335 to 355, and 364 to 384; these read AGGI…NSPL, VWLG…IFFL, ALPG…YIAI, GWAI…SLLG, VFLA…IAFF, SGLN…LVAL, LLPY…SGVH, VAFA…LSGI, VALG…VLAI, GVAI…NLAF, and EVKV…IVLL.

This sequence belongs to the NhaA Na(+)/H(+) (TC 2.A.33) antiporter family.

It localises to the cell inner membrane. The catalysed reaction is Na(+)(in) + 2 H(+)(out) = Na(+)(out) + 2 H(+)(in). Its function is as follows. Na(+)/H(+) antiporter that extrudes sodium in exchange for external protons. The protein is Na(+)/H(+) antiporter NhaA 2 of Pseudomonas syringae pv. tomato (strain ATCC BAA-871 / DC3000).